A 369-amino-acid chain; its full sequence is Tyrosyl-DNA phosphodiesterase 2 (369 aa).

The tract at residues 58–77 (EKTEVTGNKRKDDTAEASGT) is disordered. Residues 59 to 71 (KTEVTGNKRKDDT) are compositionally biased toward basic and acidic residues. An interaction with 5' end of substrate DNA region spans residues 129–133 (NVDGL). 2 residues coordinate Mg(2+): aspartate 131 and glutamate 161. Residues 235–240 (HLESCK) are interaction with 5' end of substrate DNA. Aspartate 271 acts as the Proton donor/acceptor in catalysis. Positions 273–275 (NLR) are interaction with 5' end of substrate DNA.

This sequence belongs to the CCR4/nocturin family. TTRAP/TDP2 subfamily. The cofactor is Mg(2+). Mn(2+) serves as cofactor. As to expression, expressed ubiquitously during blastula stages and throughout gastrulation. Shortly after shield formation, expressed weakly in dorsal forerunner cells (DFCs). Between somite stages 5 and 9, expressed in the tailbud and around the Kupffer's vesicle at a higher level than the more uniform expression in the embryo.

The protein localises to the nucleus. Its subcellular location is the PML body. Its function is as follows. DNA repair enzyme that can remove a variety of covalent adducts from DNA through hydrolysis of a 5'-phosphodiester bond, giving rise to DNA with a free 5' phosphate. Catalyzes the hydrolysis of dead-end complexes between DNA and the topoisomerase 2 (top2) active site tyrosine residue. Hydrolyzes 5'-phosphoglycolates on protruding 5' ends on DNA double-strand breaks (DSBs) due to DNA damage by radiation and free radicals. Controls gastrulation movements and left/right (L/R) axis determination via smad3-mediated regulation of cdh1/e-cadherin. Regulates the formation of Kupffer's vesicle, a signaling center essential for establishing L/R asymmetry. Modulates smad3 activity through modulating nodal-acvr1/akt4 signaling. The chain is Tyrosyl-DNA phosphodiesterase 2 (tdp2) from Danio rerio (Zebrafish).